Reading from the N-terminus, the 341-residue chain is DNA-directed RNA polymerase subunit alpha (341 aa).

The alpha N-terminal domain (alpha-NTD) stretch occupies residues 1–237 (MLSLSKNWNA…EQLQLFISFE (237 aa)). Positions 247–341 (TDALPFSPYL…LSKRYEDSYN (95 aa)) are alpha C-terminal domain (alpha-CTD).

The protein belongs to the RNA polymerase alpha chain family. Homodimer. The RNAP catalytic core consists of 2 alpha, 1 beta, 1 beta' and 1 omega subunit. When a sigma factor is associated with the core the holoenzyme is formed, which can initiate transcription.

It carries out the reaction RNA(n) + a ribonucleoside 5'-triphosphate = RNA(n+1) + diphosphate. DNA-dependent RNA polymerase catalyzes the transcription of DNA into RNA using the four ribonucleoside triphosphates as substrates. The chain is DNA-directed RNA polymerase subunit alpha from Rickettsia bellii (strain RML369-C).